The chain runs to 572 residues: MTLEIPRRQYVSNYGPTVGDRVRLADTELIIEVEEDFTTYGEEIKFGGGKTIRDGMGQSPTATRANGALDLVITNALILDWWGIVKADVGIRDGYIVGIGKAGNPNIQAGVTPGMVVGPSTEVIAGENLILTAGGIDAHVHFICPQLCEFAIASGVTTLLGGGTGPATGSNATTCTPGAWNLGKMLQAAEGFPVNLGFFGKGNAAFPAALREQVEAGACGLKIHEDWGSTPAVIDSCLQVADEYDIQTLIHTDTLNESAFVEDTIAAINGRTIHTFHTEGAGGGHAPDIIRIASEPNVLPSSTNPTRPFTRNTIEEHLDMLMVCHHLSKNVPEDIAFAESRIRPQTIAAEDILHDMGVFSIISSDSQAMGRVGEVIIRTWQTAHKMKVQRGPLPQDSSRNDNFRAKRYVAKYTICPAIAQGLSHVIGSVEVGKLADLCLWKPAFFGVKPEIVLKGGLIAYAQMGDPNASIPTPQPVYPRPMFGSFGRALTETSLLFVSQAALDLGIPEKLGIQRRAVAVKNCREIGKADLKLNTATPHIEVNPETYEVRADGELLTCEPAEVLPMAQRYFLF.

Residues 134-572 enclose the Urease domain; the sequence is GGIDAHVHFI…LPMAQRYFLF (439 aa). Ni(2+) contacts are provided by histidine 139, histidine 141, and lysine 222. Lysine 222 is subject to N6-carboxylysine. Histidine 224 contacts substrate. Ni(2+)-binding residues include histidine 251 and histidine 277. Residue histidine 325 is the Proton donor of the active site. Residue aspartate 365 coordinates Ni(2+).

Belongs to the metallo-dependent hydrolases superfamily. Urease alpha subunit family. In terms of assembly, heterotrimer of UreA (gamma), UreB (beta) and UreC (alpha) subunits. Three heterotrimers associate to form the active enzyme. It depends on Ni cation as a cofactor. Post-translationally, carboxylation allows a single lysine to coordinate two nickel ions.

The protein localises to the cytoplasm. It catalyses the reaction urea + 2 H2O + H(+) = hydrogencarbonate + 2 NH4(+). It functions in the pathway nitrogen metabolism; urea degradation; CO(2) and NH(3) from urea (urease route): step 1/1. The chain is Urease subunit alpha from Synechococcus sp. (strain JA-2-3B'a(2-13)) (Cyanobacteria bacterium Yellowstone B-Prime).